The chain runs to 265 residues: Shikimate dehydrogenase (NADP(+)) (265 aa).

Residues 15–17 and Thr-62 contribute to the shikimate site; that span reads SLS. The active-site Proton acceptor is the Lys-66. 2 residues coordinate shikimate: Asn-87 and Asp-102. Residues 125–129, 149–154, and Leu-209 contribute to the NADP(+) site; these read GAGGA and NRTLEK. Position 211 (Tyr-211) interacts with shikimate. Gly-233 is a binding site for NADP(+).

It belongs to the shikimate dehydrogenase family. As to quaternary structure, homodimer.

It catalyses the reaction shikimate + NADP(+) = 3-dehydroshikimate + NADPH + H(+). Its pathway is metabolic intermediate biosynthesis; chorismate biosynthesis; chorismate from D-erythrose 4-phosphate and phosphoenolpyruvate: step 4/7. Functionally, involved in the biosynthesis of the chorismate, which leads to the biosynthesis of aromatic amino acids. Catalyzes the reversible NADPH linked reduction of 3-dehydroshikimate (DHSA) to yield shikimate (SA). The protein is Shikimate dehydrogenase (NADP(+)) of Legionella pneumophila (strain Corby).